Consider the following 284-residue polypeptide: L-ribulose-5-phosphate 3-epimerase UlaE (284 aa).

This sequence belongs to the L-ribulose-5-phosphate 3-epimerase family.

The catalysed reaction is L-ribulose 5-phosphate = L-xylulose 5-phosphate. It participates in cofactor degradation; L-ascorbate degradation; D-xylulose 5-phosphate from L-ascorbate: step 3/4. Its function is as follows. Catalyzes the isomerization of L-xylulose-5-phosphate to L-ribulose-5-phosphate. Is involved in the anaerobic L-ascorbate utilization. This is L-ribulose-5-phosphate 3-epimerase UlaE from Escherichia coli (strain ATCC 8739 / DSM 1576 / NBRC 3972 / NCIMB 8545 / WDCM 00012 / Crooks).